We begin with the raw amino-acid sequence, 297 residues long: Acetaldehyde dehydrogenase (297 aa).

18-21 (TGNI) lines the NAD(+) pocket. Cys133 (acyl-thioester intermediate) is an active-site residue. NAD(+) is bound by residues 165–173 (SAGPATRLN) and Asn275.

This sequence belongs to the acetaldehyde dehydrogenase family.

It carries out the reaction acetaldehyde + NAD(+) + CoA = acetyl-CoA + NADH + H(+). The sequence is that of Acetaldehyde dehydrogenase from Spirochaeta aurantia.